A 274-amino-acid chain; its full sequence is Large ribosomal subunit protein uL2 (274 aa).

Disordered stretches follow at residues 28 to 55 (APHAPLLEKKSKSGGRNNNGRITTRHVG) and 224 to 274 (VAMN…RRRK).

The protein belongs to the universal ribosomal protein uL2 family. As to quaternary structure, part of the 50S ribosomal subunit. Forms a bridge to the 30S subunit in the 70S ribosome.

Functionally, one of the primary rRNA binding proteins. Required for association of the 30S and 50S subunits to form the 70S ribosome, for tRNA binding and peptide bond formation. It has been suggested to have peptidyltransferase activity; this is somewhat controversial. Makes several contacts with the 16S rRNA in the 70S ribosome. The sequence is that of Large ribosomal subunit protein uL2 from Pseudomonas putida (strain GB-1).